Consider the following 138-residue polypeptide: Putative pre-16S rRNA nuclease (138 aa).

This sequence belongs to the YqgF nuclease family.

It is found in the cytoplasm. Its function is as follows. Could be a nuclease involved in processing of the 5'-end of pre-16S rRNA. The protein is Putative pre-16S rRNA nuclease of Azobacteroides pseudotrichonymphae genomovar. CFP2.